The sequence spans 526 residues: GMP synthase [glutamine-hydrolyzing] (526 aa).

The region spanning 10–208 (RILILDFGSQ…VVDLCGCEKL (199 aa)) is the Glutamine amidotransferase type-1 domain. Cysteine 87 acts as the Nucleophile in catalysis. Residues histidine 182 and glutamate 184 contribute to the active site. A GMPS ATP-PPase domain is found at 209-401 (WTTENIIDDS…LGLPSDMVYR (193 aa)). ATP is bound at residue 236–242 (SGGVDSS).

In terms of assembly, homodimer.

The catalysed reaction is XMP + L-glutamine + ATP + H2O = GMP + L-glutamate + AMP + diphosphate + 2 H(+). Its pathway is purine metabolism; GMP biosynthesis; GMP from XMP (L-Gln route): step 1/1. Catalyzes the synthesis of GMP from XMP. The chain is GMP synthase [glutamine-hydrolyzing] from Hydrogenovibrio crunogenus (strain DSM 25203 / XCL-2) (Thiomicrospira crunogena).